The following is a 465-amino-acid chain: UDP-N-acetylmuramoylalanine--D-glutamate ligase (465 aa).

127–133 (GSNGKST) is an ATP binding site.

This sequence belongs to the MurCDEF family.

It localises to the cytoplasm. It carries out the reaction UDP-N-acetyl-alpha-D-muramoyl-L-alanine + D-glutamate + ATP = UDP-N-acetyl-alpha-D-muramoyl-L-alanyl-D-glutamate + ADP + phosphate + H(+). Its pathway is cell wall biogenesis; peptidoglycan biosynthesis. Its function is as follows. Cell wall formation. Catalyzes the addition of glutamate to the nucleotide precursor UDP-N-acetylmuramoyl-L-alanine (UMA). This is UDP-N-acetylmuramoylalanine--D-glutamate ligase from Cereibacter sphaeroides (strain ATCC 17023 / DSM 158 / JCM 6121 / CCUG 31486 / LMG 2827 / NBRC 12203 / NCIMB 8253 / ATH 2.4.1.) (Rhodobacter sphaeroides).